A 244-amino-acid polypeptide reads, in one-letter code: 1-(5-phosphoribosyl)-5-[(5-phosphoribosylamino)methylideneamino] imidazole-4-carboxamide isomerase (244 aa).

Aspartate 8 (proton acceptor) is an active-site residue. The active-site Proton donor is the aspartate 129.

Belongs to the HisA/HisF family.

The protein resides in the cytoplasm. It carries out the reaction 1-(5-phospho-beta-D-ribosyl)-5-[(5-phospho-beta-D-ribosylamino)methylideneamino]imidazole-4-carboxamide = 5-[(5-phospho-1-deoxy-D-ribulos-1-ylimino)methylamino]-1-(5-phospho-beta-D-ribosyl)imidazole-4-carboxamide. The protein operates within amino-acid biosynthesis; L-histidine biosynthesis; L-histidine from 5-phospho-alpha-D-ribose 1-diphosphate: step 4/9. In Chelativorans sp. (strain BNC1), this protein is 1-(5-phosphoribosyl)-5-[(5-phosphoribosylamino)methylideneamino] imidazole-4-carboxamide isomerase.